Here is a 119-residue protein sequence, read N- to C-terminus: MAIPSRLRRTTDQREALLRDLVTDLIINDRITTTEAKAKSVQRVADKMVTLAKKGTLAARRQAAETVRLEDAGEGKDALQKLFSVIAPRYNDRTGGYTRIIKTVPRRGDAAPMAIIEFI.

The protein belongs to the bacterial ribosomal protein bL17 family. Part of the 50S ribosomal subunit. Contacts protein L32.

The sequence is that of Large ribosomal subunit protein bL17 from Acholeplasma laidlawii (strain PG-8A).